The chain runs to 420 residues: Beta-arrestin-2 (420 aa).

Phosphotyrosine is present on tyrosine 48. Proline 176 and proline 181 each carry hydroxyproline; by PHD2. The segment at 240–409 (ADICLFSTAQ…EDFARLRLKG (170 aa)) is interaction with TRAF6. Serine 360 carries the post-translational modification Phosphoserine. The interaction with AP2B1 stretch occupies residues 374-420 (PETDAPVDTNLIEFETNYATDDDIVFEDFARLRLKGLKDEDYDDQFC). Threonine 393 is modified (phosphothreonine). The [DE]-X(1,2)-F-X-X-[FL]-X-X-X-R motif motif lies at 396–406 (DIVFEDFARLR).

It belongs to the arrestin family. Homooligomer; the self-association is mediated by InsP6-binding. Heterooligomer with ARRB1; the association is mediated by InsP6-binding. Interacts with ADRB2 and CHRM2. Interacts with PDE4A. Interacts with PDE4D. Interacts with MAPK10, MAPK1 and MAPK3. Interacts with DRD2. Interacts with FSHR. Interacts with CLTC. Interacts with HTR2C. Interacts with CRR5. Interacts with CXCR4. Interacts with SRC. Interacts with DUSP16; the interaction is interrupted by stimulation of AGTR1 and activation of MAPK10. Interacts with CHUK; the interaction is enhanced stimulation of ADRB2. Interacts with RELA. Interacts with MDM2; the interaction is enhanced by activation of GPCRs. Interacts with SLC9A5. Interacts with TRAF6. Interacts with IGF1R. Interacts with ENG. Interacts with KIR2DL1, KIR2DL3 and KIR2DL4. Interacts with LDLR. Interacts with AP2B1. Interacts with C5AR1. Interacts with RAF1. Interacts with MAP2K1. Interacts with MAPK1. Interacts with MAPK10; the interaction enhances MAPK10 activation by MAP3K5. Interacts with MAP2K4; the interaction is enhanced by presence of MAP3K5 and MAPK10. Interacts with MAP3K5. Interacts with AKT1. Interacts with IKBKB and MAP3K14. Interacts with SMO (activated). Interacts with GSK3A and GSK3B. Associates with protein phosphatase 2A (PP2A). Interacts with CXCR4; the interaction is dependent on C-terminal phosphorylation of CXCR4 and allows activation of MAPK1 and MAPK3. Interacts with GPR143. Interacts with HCK and CXCR1 (phosphorylated). Interacts with ACKR3 and ACKR4. Interacts with ARRDC1; the interaction is direct. Interacts with GPR61, GPR62 and GPR135. Interacts (via NACHT and LRR domains) with NLRP3; this interaction is direct and inducible by omega-3 polyunsaturated fatty acids (PUFAs). Interacts with FFAR4 (via C-terminus); this interaction is stimulated by long-chain fatty acids (LCFAs). Interacts with GPR35. Interacts with GPR84. Interacts with TIGIT; this interaction inhibits the NF-kappa-B pathway. Interacts with TGFBR3. In terms of processing, phosphorylated at Thr-382 in the cytoplasm; probably dephosphorylated at the plasma membrane. The phosphorylation does not regulate internalization and recycling of ADRB2, interaction with clathrin or AP2B1. The ubiquitination status appears to regulate the formation and trafficking of beta-arrestin-GPCR complexes and signaling. Ubiquitination appears to occur GPCR-specific. Ubiquitinated by MDM2; the ubiquitination is required for rapid internalization of ADRB2. Deubiquitinated by USP33; the deubiquitination leads to a dissociation of the beta-arrestin-GPCR complex. Stimulation of a class A GPCR, such as ADRB2, induces transient ubiquitination and subsequently promotes association with USP33. Stimulation of a class B GPCR promotes a sustained ubiquitination. Deubiquitinated by USP20; allowing USP20 to deubiquitinate TRAF6 leading to inhibition of NF-kappa-B signaling. Post-translationally, hydroxylation by PHD2 modulates the rate of internalization by slowing down recruitment to the plasma membrane and inhibiting subsequent co-internalization with class A receptors. Found in a variety of tissues. The short isoform is the most abundant form in all tissues.

The protein localises to the cytoplasm. It localises to the nucleus. Its subcellular location is the cell membrane. It is found in the membrane. The protein resides in the clathrin-coated pit. The protein localises to the cytoplasmic vesicle. Functions in regulating agonist-mediated G-protein coupled receptor (GPCR) signaling by mediating both receptor desensitization and resensitization processes. During homologous desensitization, beta-arrestins bind to the GPRK-phosphorylated receptor and sterically preclude its coupling to the cognate G-protein; the binding appears to require additional receptor determinants exposed only in the active receptor conformation. The beta-arrestins target many receptors for internalization by acting as endocytic adapters (CLASPs, clathrin-associated sorting proteins) and recruiting the GPRCs to the adapter protein 2 complex 2 (AP-2) in clathrin-coated pits (CCPs). However, the extent of beta-arrestin involvement appears to vary significantly depending on the receptor, agonist and cell type. Internalized arrestin-receptor complexes traffic to intracellular endosomes, where they remain uncoupled from G-proteins. Two different modes of arrestin-mediated internalization occur. Class A receptors, like ADRB2, OPRM1, ENDRA, D1AR and ADRA1B dissociate from beta-arrestin at or near the plasma membrane and undergo rapid recycling. Class B receptors, like AVPR2, AGTR1, NTSR1, TRHR and TACR1 internalize as a complex with arrestin and traffic with it to endosomal vesicles, presumably as desensitized receptors, for extended periods of time. Receptor resensitization then requires that receptor-bound arrestin is removed so that the receptor can be dephosphorylated and returned to the plasma membrane. Mediates endocytosis of CCR7 following ligation of CCL19 but not CCL21. Involved in internalization of P2RY1, P2RY4, P2RY6 and P2RY11 and ATP-stimulated internalization of P2RY2. Involved in phosphorylation-dependent internalization of OPRD1 and subsequent recycling or degradation. Involved in ubiquitination of IGF1R. Beta-arrestins function as multivalent adapter proteins that can switch the GPCR from a G-protein signaling mode that transmits short-lived signals from the plasma membrane via small molecule second messengers and ion channels to a beta-arrestin signaling mode that transmits a distinct set of signals that are initiated as the receptor internalizes and transits the intracellular compartment. Acts as a signaling scaffold for MAPK pathways such as MAPK1/3 (ERK1/2) and MAPK10 (JNK3). ERK1/2 and JNK3 activated by the beta-arrestin scaffold are largely excluded from the nucleus and confined to cytoplasmic locations such as endocytic vesicles, also called beta-arrestin signalosomes. Acts as a signaling scaffold for the AKT1 pathway. GPCRs for which the beta-arrestin-mediated signaling relies on both ARRB1 and ARRB2 (codependent regulation) include ADRB2, F2RL1 and PTH1R. For some GPCRs the beta-arrestin-mediated signaling relies on either ARRB1 or ARRB2 and is inhibited by the other respective beta-arrestin form (reciprocal regulation). Increases ERK1/2 signaling in AGTR1- and AVPR2-mediated activation (reciprocal regulation). Involved in CCR7-mediated ERK1/2 signaling involving ligand CCL19. Is involved in type-1A angiotensin II receptor/AGTR1-mediated ERK activity. Is involved in type-1A angiotensin II receptor/AGTR1-mediated MAPK10 activity. Is involved in dopamine-stimulated AKT1 activity in the striatum by disrupting the association of AKT1 with its negative regulator PP2A. Involved in AGTR1-mediated chemotaxis. Appears to function as signaling scaffold involved in regulation of MIP-1-beta-stimulated CCR5-dependent chemotaxis. Involved in attenuation of NF-kappa-B-dependent transcription in response to GPCR or cytokine stimulation by interacting with and stabilizing CHUK. Suppresses UV-induced NF-kappa-B-dependent activation by interacting with CHUK. The function is promoted by stimulation of ADRB2 and dephosphorylation of ARRB2. Involved in p53/TP53-mediated apoptosis by regulating MDM2 and reducing the MDM2-mediated degradation of p53/TP53. May serve as nuclear messenger for GPCRs. Upon stimulation of OR1D2, may be involved in regulation of gene expression during the early processes of fertilization. Also involved in regulation of receptors other than GPCRs. Involved in endocytosis of TGFBR2 and TGFBR3 and down-regulates TGF-beta signaling such as NF-kappa-B activation. Involved in endocytosis of low-density lipoprotein receptor/LDLR. Involved in endocytosis of smoothened homolog/Smo, which also requires GRK2. Involved in endocytosis of SLC9A5. Involved in endocytosis of ENG and subsequent TGF-beta-mediated ERK activation and migration of epithelial cells. Involved in Toll-like receptor and IL-1 receptor signaling through the interaction with TRAF6 which prevents TRAF6 autoubiquitination and oligomerization required for activation of NF-kappa-B and JUN. Involved in insulin resistance by acting as insulin-induced signaling scaffold for SRC, AKT1 and INSR. Involved in regulation of inhibitory signaling of natural killer cells by recruiting PTPN6 and PTPN11 to KIR2DL1. Involved in IL8-mediated granule release in neutrophils. Involved in the internalization of the atypical chemokine receptor ACKR3. Acts as an adapter protein coupling FFAR4 receptor to specific downstream signaling pathways, as well as mediating receptor endocytosis. During the activation step of NLRP3 inflammasome, directly associates with NLRP3 leading to inhibition of pro-inflammatory cytokine release and inhibition of inflammation. The protein is Beta-arrestin-2 (ARRB2) of Bos taurus (Bovine).